We begin with the raw amino-acid sequence, 270 residues long: uncharacterized protein (270 aa).

The signal sequence occupies residues Met1–Gly22. Cys23 carries the N-palmitoyl cysteine lipid modification. Cys23 carries S-diacylglycerol cysteine lipidation.

Belongs to the staphylococcal tandem lipoprotein family.

The protein localises to the cell membrane. This is an uncharacterized protein from Staphylococcus aureus (strain COL).